The primary structure comprises 133 residues: DUF35 domain-containing scaffold protein (133 aa).

Positions 23, 26, 37, and 40 each coordinate Zn(2+).

It belongs to the scaffold protein DUF35 family. Interacts with acetoacetyl-CoA thiolase and HMG-CoA synthase (HMGCS) that catalyzes the first and second step in the mevalonate pathway, respectively.

Functionally, functions as a scaffold to connect the acetoacetyl-CoA thiolase and HMG-CoA synthase (HMGCS) dimers in the channeling thiolase/HMGCS complex, which allows for efficient coupling of the endergonic thiolase reaction with the exergonic HMGCS reaction. This is DUF35 domain-containing scaffold protein from Methanothermobacter thermautotrophicus (strain ATCC 29096 / DSM 1053 / JCM 10044 / NBRC 100330 / Delta H) (Methanobacterium thermoautotrophicum).